Here is a 1613-residue protein sequence, read N- to C-terminus: Myosin-IIIa (1613 aa).

A Protein kinase domain is found at 21-287; it reads WEIIETIGKG…VSDLLKHKFI (267 aa). ATP contacts are provided by residues 27–35 and Lys50; that span reads IGKGTYGKV. Asp150 functions as the Proton acceptor in the catalytic mechanism. Residues 338-1052 enclose the Myosin motor domain; the sequence is KDVDDLATLD…HVEQLNLMRK (715 aa). An actin-binding region spans residues 933 to 955; it reads LMDLLSKMVVGQPHFVRCIKPNN. IQ domains follow at residues 1054-1083 and 1081-1110; these read ATNK…KRKS and RKSS…MKNT. Disordered regions lie at residues 1136-1168 and 1476-1506; these read VKKQ…TAPF and SGVS…EDST. The span at 1145 to 1161 shows a compositional bias: low complexity; it reads PTNESNTSTPNNKESPS. Positions 1398 to 1476 are interaction with MORN4; it reads EGVHHSKMVD…RHVSTHQYLS (79 aa). The segment covering 1488-1497 has biased composition (basic residues); it reads RPPRRPRKPK.

This sequence in the C-terminal section; belongs to the TRAFAC class myosin-kinesin ATPase superfamily. Myosin family. The protein in the N-terminal section; belongs to the protein kinase superfamily. STE Ser/Thr protein kinase family. Interacts with MORN4. Interacts (via C-terminus) with ESPN and ESPNL. Expressed in the cochlear hair cells (at protein level). Expressed in utricle hair bundles (at protein level).

It is found in the cytoplasm. Its subcellular location is the cytoskeleton. The protein resides in the cell projection. The protein localises to the filopodium tip. It localises to the stereocilium. It carries out the reaction L-seryl-[protein] + ATP = O-phospho-L-seryl-[protein] + ADP + H(+). The catalysed reaction is L-threonyl-[protein] + ATP = O-phospho-L-threonyl-[protein] + ADP + H(+). It catalyses the reaction ATP + H2O = ADP + phosphate + H(+). Actin-dependent motor protein with a protein kinase activity, playing an essential role in hearing. Probably plays also a role in vision. Required for normal cochlear hair bundle development and hearing. Plays an important role in the early steps of cochlear hair bundle morphogenesis. Influences the number and lengths of stereocilia to be produced and limits the growth of microvilli within the forming auditory hair bundles thereby contributing to the architecture of the hair bundle, including its staircase pattern. Involved in the elongation of actin in stereocilia tips by transporting the actin regulatory factor ESPN to the plus ends of actin filaments. This is Myosin-IIIa (Myo3a) from Mus musculus (Mouse).